A 1394-amino-acid polypeptide reads, in one-letter code: DNA-directed RNA polymerase subunit beta'' (1394 aa).

Cys-224, Cys-295, Cys-302, and Cys-305 together coordinate Zn(2+).

The protein belongs to the RNA polymerase beta' chain family. RpoC2 subfamily. In plastids the minimal PEP RNA polymerase catalytic core is composed of four subunits: alpha, beta, beta', and beta''. When a (nuclear-encoded) sigma factor is associated with the core the holoenzyme is formed, which can initiate transcription. The cofactor is Zn(2+).

It is found in the plastid. The protein resides in the chloroplast. The catalysed reaction is RNA(n) + a ribonucleoside 5'-triphosphate = RNA(n+1) + diphosphate. In terms of biological role, DNA-dependent RNA polymerase catalyzes the transcription of DNA into RNA using the four ribonucleoside triphosphates as substrates. In Cucumis sativus (Cucumber), this protein is DNA-directed RNA polymerase subunit beta''.